We begin with the raw amino-acid sequence, 593 residues long: Zinc metalloproteinase-disintegrin-like kaouthiagin-like (593 aa).

The N-terminal stretch at M1–S20 is a signal peptide. The propeptide occupies I21 to E196. One can recognise a Peptidase M12B domain in the interval K205–P400. Ca(2+) contacts are provided by E208 and D292. Intrachain disulfides connect C316-C395, C356-C379, and C358-C363. A glycan (N-linked (GlcNAc...) asparagine) is linked at N319. Zn(2+) contacts are provided by H341, H345, and H351. Ca(2+) contacts are provided by C395, N398, I410, N413, F415, E417, E420, and D423. The 70-residue stretch at P408–N477 folds into the Disintegrin domain. Disulfide bonds link C411/C440, C422/C435, C424/C430, C434/C462, C449/C469, C456/C488, C481/C493, C500/C550, C515/C558, C528/C538, C545/C581, and C575/C586. Residues D455–D457 carry the D/ECD-tripeptide motif. Residues D457, L458, E460, D472, and S473 each coordinate Ca(2+). Residue N490 is glycosylated (N-linked (GlcNAc...) asparagine).

It belongs to the venom metalloproteinase (M12B) family. P-III subfamily. P-IIIa sub-subfamily. In terms of assembly, monomer. The cofactor is Zn(2+). In terms of tissue distribution, expressed by the venom gland.

The protein localises to the secreted. Snake venom zinc metalloproteinase that cleaves the membrane-bound precursor of TNF-alpha (TNF) into its mature soluble form showing the same digestion pattern than ADAM17. This Naja atra (Chinese cobra) protein is Zinc metalloproteinase-disintegrin-like kaouthiagin-like.